The following is a 227-amino-acid chain: Type II restriction enzyme HhaII (227 aa).

Homodimer.

The catalysed reaction is Endonucleolytic cleavage of DNA to give specific double-stranded fragments with terminal 5'-phosphates.. A P subtype restriction enzyme that recognizes the double-stranded sequence 5'-GANTC-3' and cleaves after G-1. This is Type II restriction enzyme HhaII (hhaIIR) from Haemophilus parahaemolyticus.